The following is a 918-amino-acid chain: MFSSITSKLSAISGGSSKNDYKEANYYNYFRILEKKQTEEIARKRCGLYSLKNHNNVFVLKEFSIETEINDCSSTSIWTQSYSNDSNTPVEAKYQLPLHPTSVVSNFQIEYQGKVIQGKIKEKEKALEKYNDAIASGGQAFMATKSDDGYFNLTLGNLPPKENVKVRVVISSELGTHTDGQLHYCLHRYMFPSYAFNFNYNVVLKFSIPIKSIDCDGFDVNVNYKENSSKKEAKITSKSQHTSGVKKNIILIIQPVELNEPKSMIEYIGGGDDKSYATAINFYPSFKNVNPDEVYQKSEFIFLIDCSGSMSGQSINKARRAMEIIIRSLNEQHKVNIYCFGSSFNKVFDKSRVYNDETLEIAGSFVEKISANLGGTELLPPMVDILSSPNDPEYPRQVFILTDGEISERDKLIDYVAKEANTTRIFTYGIGASVDQELVIGLSKACKGYYEMIKETTNMEKQVMKLLNVAFEPMLSNIKLDWSSCGLVDVIQAPSHIRPLFNQERMMIYSMIPSNQTNQDIINASIETSKPLIITLTGDGPKGNVLSFPITLDFKNDLSTNSNQIHTLAAFKHIQDLEESERKEKKDNKDKIVELGKKYGLVSKHTSYIVTADSDNVTEETMKTVDIMNQSPPIRPGGRIVSRGGGRSGASGALSSSILSRKRSSSPSTATKRSSSSSFSSSYLSLSSSSQKKKKEVSRSDDDDDDEKIENCVESYESDGGDQSSEQDEEEEDDCDDFHEDLDEDLGATAMDVDKKECEKECKKKDSSKVDLKVKPSKVPLPSRSPSVSKPTTTSLLSPSPKSAPSAPSQQKSVKSTGDLLIDLLKIQKSNGSWTKSSIDQLKIPTDKAPAELSTTELNDIWVTIIVIAKIVKFFSSEKAQYELAIQKSTRWVKLQLSKLNLPENTFDKFLSNAKSLV.

The region spanning 44–172 (KRCGLYSLKN…NVKVRVVISS (129 aa)) is the VIT domain. Positions 299–467 (EFIFLIDCSG…NMEKQVMKLL (169 aa)) constitute a VWFA domain. The segment at 625-814 (VDIMNQSPPI…PSAPSQQKSV (190 aa)) is disordered. Positions 650–690 (ASGALSSSILSRKRSSSPSTATKRSSSSSFSSSYLSLSSSS) are enriched in low complexity. A compositionally biased stretch (acidic residues) spans 716–746 (YESDGGDQSSEQDEEEEDDCDDFHEDLDEDL). Residues 752-774 (DVDKKECEKECKKKDSSKVDLKV) show a composition bias toward basic and acidic residues. Positions 777 to 814 (SKVPLPSRSPSVSKPTTTSLLSPSPKSAPSAPSQQKSV) are enriched in low complexity.

The protein is von Willebrand factor A domain-containing protein DDB_G0292016 of Dictyostelium discoideum (Social amoeba).